The chain runs to 329 residues: Alternative oxidase, mitochondrial (329 aa).

The helical transmembrane segment at 115-135 (VISRCLFLETVAGVPGMVGGM) threads the bilayer. Fe cation is bound by residues Glu-123, Glu-162, and His-165. Residues 181-201 (VSIIITQAIMYLFLLVAYVIS) traverse the membrane as a helical segment. Positions 213, 266, and 269 each coordinate Fe cation. The tract at residues 300 to 329 (EMYSNQPSGKTRTDFGSEGAKTASNVNKHV) is disordered.

This sequence belongs to the alternative oxidase family. In terms of assembly, homodimer; disulfide-linked. Fe cation is required as a cofactor.

It localises to the mitochondrion inner membrane. Its function is as follows. Catalyzes cyanide-resistant oxygen consumption. May increase respiration when the cytochrome respiratory pathway is restricted, or in response to low temperatures. The sequence is that of Alternative oxidase, mitochondrial (AOX) from Trypanosoma brucei brucei.